Reading from the N-terminus, the 78-residue chain is Toxin BmTxKS4 (78 aa).

An N-terminal signal peptide occupies residues 1–21 (MKLKISFLILVLFSVFFAIEG). Positions 22-32 (IIKWFPASVNG) are excised as a propeptide.

Post-translationally, contains 3 disulfide bonds. Expressed by the venom gland.

The protein localises to the secreted. Functionally, reversibly inhibits potassium channels. The sequence is that of Toxin BmTxKS4 from Olivierus martensii (Manchurian scorpion).